A 406-amino-acid chain; its full sequence is Lysine-specific demethylase 8 (406 aa).

Residues 143–152 (KAERSEEPFS) are compositionally biased toward basic and acidic residues. The tract at residues 143-162 (KAERSEEPFSKKRKHDCKSE) is disordered. The region spanning 270–406 (DQVPELKEDI…LSFSVSFWWS (137 aa)) is the JmjC domain. Residues His-311 and Asp-313 each coordinate Fe cation.

Requires Fe(2+) as cofactor.

It localises to the nucleus. The enzyme catalyses N(6),N(6)-dimethyl-L-lysyl(36)-[histone H3] + 2 2-oxoglutarate + 2 O2 = L-lysyl(36)-[histone H3] + 2 formaldehyde + 2 succinate + 2 CO2. In terms of biological role, histone demethylase required for G2/M phase cell cycle progression. Specifically demethylates dimethylated 'Lys-36' (H3K36me2) of histone H3, an epigenetic repressive mark, thereby acting as a transcription activator. May play a role in the regulation of the circadian clock. This Danio rerio (Zebrafish) protein is Lysine-specific demethylase 8 (kdm8).